We begin with the raw amino-acid sequence, 229 residues long: Flagellar L-ring protein (229 aa).

Positions 1–25 (MKQVRLLPPAPVRAVCALAVAALAG) are cleaved as a signal peptide. Cys26 carries N-palmitoyl cysteine lipidation. Residue Cys26 is the site of S-diacylglycerol cysteine attachment.

Belongs to the FlgH family. As to quaternary structure, the basal body constitutes a major portion of the flagellar organelle and consists of four rings (L,P,S, and M) mounted on a central rod.

It localises to the cell outer membrane. It is found in the bacterial flagellum basal body. Assembles around the rod to form the L-ring and probably protects the motor/basal body from shearing forces during rotation. The sequence is that of Flagellar L-ring protein from Burkholderia ambifaria (strain ATCC BAA-244 / DSM 16087 / CCUG 44356 / LMG 19182 / AMMD) (Burkholderia cepacia (strain AMMD)).